The sequence spans 386 residues: Demethylsterigmatocystin 6-O-methyltransferase (386 aa).

Residue 137–150 coordinates substrate; the sequence is FDISGPCTQILPDF. The substrate binding stretch occupies residues 177 to 197; that stretch reads MFEWMPQHPKHMESLGHLMAL. Residues 228–229, Asp253, 273–274, and Arg289 each bind S-adenosyl-L-methionine; these read GG and NF. His293 acts as the Proton acceptor in catalysis.

The protein belongs to the class I-like SAM-binding methyltransferase superfamily. Cation-independent O-methyltransferase family. COMT subfamily.

It catalyses the reaction 6-demethylsterigmatocystin + S-adenosyl-L-methionine = sterigmatocystin + S-adenosyl-L-homocysteine + H(+). It participates in mycotoxin biosynthesis; aflatoxin biosynthesis. Its function is as follows. Catalyzes both the conversion of demethylsterigmatocystin (DMST) to sterigmatocystin and the conversion of dihydrodemethylsterigmatocystin to dihydrosterigmatocystin (DHDMST) during aflatoxin biosynthesis. This chain is Demethylsterigmatocystin 6-O-methyltransferase (omtB), found in Aspergillus flavus (strain ATCC 200026 / FGSC A1120 / IAM 13836 / NRRL 3357 / JCM 12722 / SRRC 167).